A 430-amino-acid polypeptide reads, in one-letter code: MENPFEITAVVAREILDSRGNPTVEVEVYTPISMGRAAVPSGASTGTHEALELRDGGKRYHGKGVRRAVENVNKIIAPELIGMDVTWQRDIDTLMLELDGTENKSNLGANAILGVSLAVAKAAANALGLPLYQYIGGTNAYVMPVPMSNVINGGVHAGNELDFQEFMIMPVGADSFREAIRWVSETYHVLKKVIAEKYGKDAINVGDEGGFAPPMKEVTEPLETLIKAIEEAGYKPGDEIALAIDAASSEFYHPDIGKYVVAGKEYTREELVDLYKELVSAYPIVSIEDPFQEEDWEGFKLITRELGGKIQIVGDDLFVTNPKRIRKGIEMGAANALLLKVNQIGTLSEAIDAAYTAFRAGYGVVVSHRSGETEDATIADLAVALNAGQIKTGAPARSDRNAKYNQLIRIEEELEGIAHYPGRKFRNPFF.

Gln-164 lines the (2R)-2-phosphoglycerate pocket. The active-site Proton donor is Glu-208. Residues Asp-245, Glu-288, and Asp-315 each coordinate Mg(2+). (2R)-2-phosphoglycerate is bound by residues Lys-340, Arg-369, Ser-370, and Lys-391. Lys-340 functions as the Proton acceptor in the catalytic mechanism.

This sequence belongs to the enolase family. It depends on Mg(2+) as a cofactor.

It is found in the cytoplasm. It localises to the secreted. The protein resides in the cell surface. The catalysed reaction is (2R)-2-phosphoglycerate = phosphoenolpyruvate + H2O. It functions in the pathway carbohydrate degradation; glycolysis; pyruvate from D-glyceraldehyde 3-phosphate: step 4/5. Catalyzes the reversible conversion of 2-phosphoglycerate (2-PG) into phosphoenolpyruvate (PEP). It is essential for the degradation of carbohydrates via glycolysis. The chain is Enolase from Thermococcus onnurineus (strain NA1).